We begin with the raw amino-acid sequence, 123 residues long: Small ribosomal subunit protein uS12cz/uS12cy (123 aa).

The protein belongs to the universal ribosomal protein uS12 family. As to quaternary structure, part of the 30S ribosomal subunit.

Its subcellular location is the plastid. It is found in the chloroplast. Its function is as follows. With S4 and S5 plays an important role in translational accuracy. Located at the interface of the 30S and 50S subunits. The polypeptide is Small ribosomal subunit protein uS12cz/uS12cy (rps12-A) (Arabis hirsuta (Hairy rock-cress)).